A 276-amino-acid polypeptide reads, in one-letter code: Formamidopyrimidine-DNA glycosylase (276 aa).

P2 (schiff-base intermediate with DNA) is an active-site residue. The Proton donor role is filled by E3. The Proton donor; for beta-elimination activity role is filled by K58. Residues H94, R112, and R157 each contribute to the DNA site. The FPG-type zinc finger occupies 242–276; that stretch reads FVYDRAGLPCRVCGTPIKQIVQGQRSTYFCPTCQR. R266 serves as the catalytic Proton donor; for delta-elimination activity.

It belongs to the FPG family. As to quaternary structure, monomer. It depends on Zn(2+) as a cofactor.

The enzyme catalyses Hydrolysis of DNA containing ring-opened 7-methylguanine residues, releasing 2,6-diamino-4-hydroxy-5-(N-methyl)formamidopyrimidine.. It catalyses the reaction 2'-deoxyribonucleotide-(2'-deoxyribose 5'-phosphate)-2'-deoxyribonucleotide-DNA = a 3'-end 2'-deoxyribonucleotide-(2,3-dehydro-2,3-deoxyribose 5'-phosphate)-DNA + a 5'-end 5'-phospho-2'-deoxyribonucleoside-DNA + H(+). Functionally, involved in base excision repair of DNA damaged by oxidation or by mutagenic agents. Acts as a DNA glycosylase that recognizes and removes damaged bases. Has a preference for oxidized purines, such as 7,8-dihydro-8-oxoguanine (8-oxoG). Has AP (apurinic/apyrimidinic) lyase activity and introduces nicks in the DNA strand. Cleaves the DNA backbone by beta-delta elimination to generate a single-strand break at the site of the removed base with both 3'- and 5'-phosphates. This chain is Formamidopyrimidine-DNA glycosylase, found in Paraburkholderia xenovorans (strain LB400).